The chain runs to 94 residues: Small ribosomal subunit protein uS17 (94 aa).

The protein belongs to the universal ribosomal protein uS17 family. In terms of assembly, part of the 30S ribosomal subunit.

Its function is as follows. One of the primary rRNA binding proteins, it binds specifically to the 5'-end of 16S ribosomal RNA. This Streptomyces avermitilis (strain ATCC 31267 / DSM 46492 / JCM 5070 / NBRC 14893 / NCIMB 12804 / NRRL 8165 / MA-4680) protein is Small ribosomal subunit protein uS17.